We begin with the raw amino-acid sequence, 216 residues long: MYTAIVNLKTYREATGANFTRFMEKFEPVQGKFELIFSPSLLDLEKAAKCGKFRFFAQHVDAEPYGAYTGHVPMDMMIDLGITGSILNHSERRLPRDTIINTLKKASKLDFTIVLCVENAEEAKYFREYEPDFIAYEPRDLIGGDVSVSTAKPEIIEDIVKIYEGTGTSVLVGAGIKTGEDVRRSIGLGARGILVASGVVKSADPTKSLNSLIELK.

Residue 7–9 (NLK) coordinates substrate. His-89 functions as the Electrophile in the catalytic mechanism. Glu-137 acts as the Proton acceptor in catalysis. Substrate is bound by residues Ile-142, Gly-175, and 196–197 (AS).

This sequence belongs to the triosephosphate isomerase family. In terms of assembly, homotetramer; dimer of dimers.

Its subcellular location is the cytoplasm. The catalysed reaction is D-glyceraldehyde 3-phosphate = dihydroxyacetone phosphate. It participates in carbohydrate biosynthesis; gluconeogenesis. Its pathway is carbohydrate degradation; glycolysis; D-glyceraldehyde 3-phosphate from glycerone phosphate: step 1/1. In terms of biological role, involved in the gluconeogenesis. Catalyzes stereospecifically the conversion of dihydroxyacetone phosphate (DHAP) to D-glyceraldehyde-3-phosphate (G3P). The chain is Triosephosphate isomerase from Thermoplasma acidophilum (strain ATCC 25905 / DSM 1728 / JCM 9062 / NBRC 15155 / AMRC-C165).